We begin with the raw amino-acid sequence, 277 residues long: 4-hydroxy-3-methylbut-2-enyl diphosphate reductase (277 aa).

C12 is a [4Fe-4S] cluster binding site. Residues H36 and H70 each coordinate (2E)-4-hydroxy-3-methylbut-2-enyl diphosphate. Residues H36 and H70 each coordinate dimethylallyl diphosphate. Isopentenyl diphosphate contacts are provided by H36 and H70. C92 provides a ligand contact to [4Fe-4S] cluster. H120 provides a ligand contact to (2E)-4-hydroxy-3-methylbut-2-enyl diphosphate. H120 contributes to the dimethylallyl diphosphate binding site. Residue H120 coordinates isopentenyl diphosphate. E122 functions as the Proton donor in the catalytic mechanism. T158 provides a ligand contact to (2E)-4-hydroxy-3-methylbut-2-enyl diphosphate. Residue C186 coordinates [4Fe-4S] cluster. Positions 214, 216, and 258 each coordinate (2E)-4-hydroxy-3-methylbut-2-enyl diphosphate. Dimethylallyl diphosphate-binding residues include S214, N216, and S258. Isopentenyl diphosphate-binding residues include S214, N216, and S258.

The protein belongs to the IspH family. [4Fe-4S] cluster serves as cofactor.

The enzyme catalyses isopentenyl diphosphate + 2 oxidized [2Fe-2S]-[ferredoxin] + H2O = (2E)-4-hydroxy-3-methylbut-2-enyl diphosphate + 2 reduced [2Fe-2S]-[ferredoxin] + 2 H(+). It catalyses the reaction dimethylallyl diphosphate + 2 oxidized [2Fe-2S]-[ferredoxin] + H2O = (2E)-4-hydroxy-3-methylbut-2-enyl diphosphate + 2 reduced [2Fe-2S]-[ferredoxin] + 2 H(+). It functions in the pathway isoprenoid biosynthesis; dimethylallyl diphosphate biosynthesis; dimethylallyl diphosphate from (2E)-4-hydroxy-3-methylbutenyl diphosphate: step 1/1. It participates in isoprenoid biosynthesis; isopentenyl diphosphate biosynthesis via DXP pathway; isopentenyl diphosphate from 1-deoxy-D-xylulose 5-phosphate: step 6/6. In terms of biological role, catalyzes the conversion of 1-hydroxy-2-methyl-2-(E)-butenyl 4-diphosphate (HMBPP) into a mixture of isopentenyl diphosphate (IPP) and dimethylallyl diphosphate (DMAPP). Acts in the terminal step of the DOXP/MEP pathway for isoprenoid precursor biosynthesis. In Campylobacter jejuni subsp. jejuni serotype O:23/36 (strain 81-176), this protein is 4-hydroxy-3-methylbut-2-enyl diphosphate reductase.